The chain runs to 131 residues: UPF0134 protein MPN_010 (131 aa).

It belongs to the UPF0134 family.

The protein is UPF0134 protein MPN_010 of Mycoplasma pneumoniae (strain ATCC 29342 / M129 / Subtype 1) (Mycoplasmoides pneumoniae).